The following is a 185-amino-acid chain: Ribosome-recycling factor (185 aa).

Residues L163–G185 form a disordered region. Over residues A167 to G185 the composition is skewed to basic and acidic residues.

The protein belongs to the RRF family.

It localises to the cytoplasm. Functionally, responsible for the release of ribosomes from messenger RNA at the termination of protein biosynthesis. May increase the efficiency of translation by recycling ribosomes from one round of translation to another. The sequence is that of Ribosome-recycling factor from Latilactobacillus sakei subsp. sakei (strain 23K) (Lactobacillus sakei subsp. sakei).